Here is a 265-residue protein sequence, read N- to C-terminus: C-type lectin domain family 12 member A (265 aa).

Residues 1–43 (MSEEVTYADLQFQNSSEMEKIPEIGKFGEKAPPAPSHVWRPAA) lie on the Cytoplasmic side of the membrane. The short motif at 5–10 (VTYADL) is the ITIM motif element. A Phosphotyrosine modification is found at tyrosine 7. A helical; Signal-anchor for type II membrane protein transmembrane segment spans residues 44–64 (LFLTLLCLLLLIGLGVLASMF). At 65-265 (HVTLKIEMKK…QLGSTYFREA (201 aa)) the chain is on the extracellular side. Residues asparagine 88 and asparagine 98 are each glycosylated (N-linked (GlcNAc...) asparagine). 4 cysteine pairs are disulfide-bonded: cysteine 118–cysteine 130, cysteine 133–cysteine 144, cysteine 161–cysteine 248, and cysteine 227–cysteine 240. Positions 140–249 (HKDSCYFLSD…CTYKKRMICE (110 aa)) constitute a C-type lectin domain. A glycan (N-linked (GlcNAc...) asparagine) is linked at asparagine 165.

Homodimer; disulfide-linked. Interacts (when the ITIM motif is phosphorylated) with PTPN6 and PTPN11. In terms of processing, phosphorylated at Tyr-7 by SRC in the ITIM motif following ligand-binding, promoting recruitment of tyrosine-protein phosphatases PTPN6 and PTPN11. Highly N-glycosylated; glycosylation varies between cell types. In terms of tissue distribution, preferentially expressed in lymphoid tissues and immune cells, including natural killer (NK) cells, T-cells, dendritic cells and monocytes or macrophages. Detected in spleen macrophage-rich red pulp and in lymph node (at protein level). Detected in peripheral blood leukocytes, dendritic cells, bone marrow, monocytes, mononuclear leukocytes and macrophages.

Its subcellular location is the cell membrane. Functionally, myeloid inhibitory C-type lectin receptor that acts as a negative regulator of myeloid cell activation. Myeloid cell inhibition is required to limit proinflammatory pathways and protect against excessive inflammation. Specifically recognizes and binds various structures, such as neutrophil extracellular traps (NETs) or monosodium urate crystals. Also acts as a pattern-recognition receptor for pathogen-associated molecules, such as plasmodium hemozoin or mycobacterial micolic acid. Ligand-binding induces phosphorylation of its ITIM motif, followed by recruitment of tyrosine-protein phosphatases PTPN6 and PTPN11, which counteract tyrosine-protein kinase SYK, thereby preventing myeloid cell activation. Acts as a pattern-recognition receptor for NETs in neutrophils: specifically recognizes DNA in NETs, leading to inhibit neutrophil activation and limit further NET formation. This regulation is essential for controlling key neutrophil responses and limit NET-mediated inflammatory conditions. Also recognizes dead cells by acting as a receptor for monosodium urate crystals, leading to down-regulate neutrophil activation. Binding to monosodium urate crystals also promotes the type I interferon response. Acts as an inhibitor of natural killer (NK) cell cytotoxicity. Also acts as an ihibitor of dendritic cell maturation in an IL10-dependent manner. This chain is C-type lectin domain family 12 member A, found in Homo sapiens (Human).